The chain runs to 421 residues: MDKLIITGGVRLDGEIRISGAKNSALPILAATLLADGPVTVQNLPHLHDITTMIELFGRMGIEPVIDEKLSVEIDPRTIKTLIAPYELVKTMRASILVLGPMVARFGEAEVALPGGCAIGSRPVDLHIRGLEAMGAIIDVEGGYIKAKAPEGGLRGAHFFFDTVSVTGTENIMMAASLANGRSVLENAAREPEVVDLANFLIAMGAKIHGAGTDTITIDGVKRLGSATYKVMPDRIETGTYLVAAAVTGGRVKVKDTDPTILEAVLLKLQEAGAEVTTGEDWIELNMHGKRPKAVNVRTAPYPAFPTDMQAQFISLNAIAEGTGAVIETIFENRFMHVYEMHRMGAQIQVEGNTAIVTGTEVLKGAPVMATDLRASASLVISALVAQGDTLIDRIYHIDRGYECIEEKLQMLGAKIRRVPG.

22–23 (KN) contacts phosphoenolpyruvate. Arginine 93 is a binding site for UDP-N-acetyl-alpha-D-glucosamine. Cysteine 117 serves as the catalytic Proton donor. At cysteine 117 the chain carries 2-(S-cysteinyl)pyruvic acid O-phosphothioketal. Residues 122 to 126 (RPVDL), aspartate 308, and isoleucine 330 contribute to the UDP-N-acetyl-alpha-D-glucosamine site.

Belongs to the EPSP synthase family. MurA subfamily.

It is found in the cytoplasm. The enzyme catalyses phosphoenolpyruvate + UDP-N-acetyl-alpha-D-glucosamine = UDP-N-acetyl-3-O-(1-carboxyvinyl)-alpha-D-glucosamine + phosphate. It participates in cell wall biogenesis; peptidoglycan biosynthesis. In terms of biological role, cell wall formation. Adds enolpyruvyl to UDP-N-acetylglucosamine. The chain is UDP-N-acetylglucosamine 1-carboxyvinyltransferase from Pseudomonas syringae pv. tomato (strain ATCC BAA-871 / DC3000).